The chain runs to 338 residues: Ketol-acid reductoisomerase (NADP(+)) (338 aa).

In terms of domain architecture, KARI N-terminal Rossmann spans 1–181 (MQVYYDKDCD…GGGRTGIIET (181 aa)). Residues 24–27 (YGSQ), Arg47, Ser50, Ser52, and 82–85 (DEFQ) contribute to the NADP(+) site. Residue His107 is part of the active site. Gly133 provides a ligand contact to NADP(+). The KARI C-terminal knotted domain maps to 182-327 (TFKDETETDL…EKLRSMMPWI (146 aa)). Asp190, Glu194, Glu226, and Glu230 together coordinate Mg(2+). Ser251 serves as a coordination point for substrate.

Belongs to the ketol-acid reductoisomerase family. Requires Mg(2+) as cofactor.

The catalysed reaction is (2R)-2,3-dihydroxy-3-methylbutanoate + NADP(+) = (2S)-2-acetolactate + NADPH + H(+). It carries out the reaction (2R,3R)-2,3-dihydroxy-3-methylpentanoate + NADP(+) = (S)-2-ethyl-2-hydroxy-3-oxobutanoate + NADPH + H(+). Its pathway is amino-acid biosynthesis; L-isoleucine biosynthesis; L-isoleucine from 2-oxobutanoate: step 2/4. It participates in amino-acid biosynthesis; L-valine biosynthesis; L-valine from pyruvate: step 2/4. Involved in the biosynthesis of branched-chain amino acids (BCAA). Catalyzes an alkyl-migration followed by a ketol-acid reduction of (S)-2-acetolactate (S2AL) to yield (R)-2,3-dihydroxy-isovalerate. In the isomerase reaction, S2AL is rearranged via a Mg-dependent methyl migration to produce 3-hydroxy-3-methyl-2-ketobutyrate (HMKB). In the reductase reaction, this 2-ketoacid undergoes a metal-dependent reduction by NADPH to yield (R)-2,3-dihydroxy-isovalerate. In Hahella chejuensis (strain KCTC 2396), this protein is Ketol-acid reductoisomerase (NADP(+)).